Reading from the N-terminus, the 272-residue chain is 2-amino-3,7-dideoxy-D-threo-hept-6-ulosonate synthase (272 aa).

Residue Asp-33 is the Proton acceptor of the active site. Residues 33–37 and 153–155 each bind 1-deoxy-D-threo-hexo-2,5-diulose 6-phosphate; these read DHGVS and YPR. The active-site Proton donor is Tyr-153. The active-site Schiff-base intermediate with substrate is Lys-184. 1-deoxy-D-threo-hexo-2,5-diulose 6-phosphate is bound by residues 209–210 and 237–238; these read GG and GR.

Belongs to the DeoC/FbaB aldolase family. ADHS subfamily. Homodecamer.

It catalyses the reaction 1-deoxy-D-threo-hexo-2,5-diulose 6-phosphate + L-aspartate 4-semialdehyde = 2,3-dioxopropyl phosphate + 2-amino-2,3,7-trideoxy-D-lyxo-hept-6-ulosonate. Functionally, catalyzes a transaldol reaction between 6-deoxy-5-ketofructose 1-phosphate (DKFP) and L-aspartate semialdehyde (ASA) with an elimination of hydroxypyruvaldehyde phosphate to yield 2-amino-3,7-dideoxy-D-threo-hept-6-ulosonate (ADH). Plays a key role in an alternative pathway of the biosynthesis of 3-dehydroquinate (DHQ), which is involved in the canonical pathway for the biosynthesis of aromatic amino acids. This is 2-amino-3,7-dideoxy-D-threo-hept-6-ulosonate synthase from Methanococcus maripaludis (strain C5 / ATCC BAA-1333).